Reading from the N-terminus, the 61-residue chain is Large ribosomal subunit protein uL30 (61 aa).

It belongs to the universal ribosomal protein uL30 family. As to quaternary structure, part of the 50S ribosomal subunit.

The protein is Large ribosomal subunit protein uL30 of Chlorobium phaeobacteroides (strain DSM 266 / SMG 266 / 2430).